We begin with the raw amino-acid sequence, 553 residues long: Major facilitator-type transporter hxnZ (553 aa).

5 consecutive transmembrane segments (helical) span residues 89–109, 128–148, 152–172, 174–194, and 213–233; these read FTVA…ISAV, VAYY…SDLI, PAFN…AGTS, FIAF…NVVC, and ALSG…WVFL. Asn-235 is a glycosylation site (N-linked (GlcNAc...) asparagine). The next 7 helical transmembrane spans lie at 257-277, 366-386, 409-429, 433-453, 459-481, 496-516, and 525-545; these read YTLI…IFVF, ALIW…FNFL, IQSA…NTFL, WMMG…VGVK, LAFS…YAIM, TASG…SLIA, and PIYA…GLPF.

The protein belongs to the major facilitator superfamily.

It is found in the cell membrane. Its function is as follows. Major facilitator-type transporter, part of the hnx cluster involved in the purine degradation. The nicotinate hydroxylase hnxS accepts nicotinate as a substrate and catalyzes the first step of nicotinate catabolism. The major facilitator-type transporters hxnP and hxnZ are probably involved in the uptake of nicotinate-derived metabolites, and the oxidoreductases hxnT and hxnY in the further metabolism of 6-OH nicotinic acid. This chain is Major facilitator-type transporter hxnZ, found in Emericella nidulans (strain FGSC A4 / ATCC 38163 / CBS 112.46 / NRRL 194 / M139) (Aspergillus nidulans).